A 449-amino-acid chain; its full sequence is Hyaluronidase (449 aa).

The first 23 residues, 1–23 (MYHLWIKCLAAWIFLKRFNGVHV), serve as a signal peptide directing secretion. Cystine bridges form between cysteine 47/cysteine 340 and cysteine 211/cysteine 227. 3 N-linked (GlcNAc...) asparagine glycosylation sites follow: asparagine 67, asparagine 103, and asparagine 111. The Proton donor role is filled by glutamate 135. N-linked (GlcNAc...) asparagine glycosylation occurs at asparagine 153. The N-linked (GlcNAc...) asparagine glycan is linked to asparagine 357. Disulfide bonds link cysteine 365-cysteine 376, cysteine 370-cysteine 427, and cysteine 429-cysteine 438. N-linked (GlcNAc...) asparagine glycosylation is present at asparagine 401. Residues 427-438 (CQCYQGWKGLYC) form the EGF-like domain.

This sequence belongs to the glycosyl hydrolase 56 family. In terms of assembly, monomer. As to expression, expressed by the venom gland.

The protein localises to the secreted. The catalysed reaction is Random hydrolysis of (1-&gt;4)-linkages between N-acetyl-beta-D-glucosamine and D-glucuronate residues in hyaluronate.. Its function is as follows. Snake venom endo-hyaluronidase that degrades hyaluronan to smaller oligosaccharide fragments. In venom, it is not toxic by itself, but increases the diffusion of other venom proteins by degrading the extracellular matrix. In addition, it displays antiedematogenic activity. The sequence is that of Hyaluronidase from Crotalus adamanteus (Eastern diamondback rattlesnake).